We begin with the raw amino-acid sequence, 126 residues long: Cysteine-rich tail protein 1 (126 aa).

The tract at residues 1–89 (MDPHETLVKN…PAGLAYAGPP (89 aa)) is disordered.

The protein belongs to the CYSRT1 family. Interacts with components of the late cornfied envelope (LCE).

It is found in the cornified envelope. In terms of biological role, component of the stratum corneum that may contribute to epidermal antimicrobial host defenses. This Bos taurus (Bovine) protein is Cysteine-rich tail protein 1 (CYSRT1).